Reading from the N-terminus, the 413-residue chain is Serine hydroxymethyltransferase (413 aa).

(6S)-5,6,7,8-tetrahydrofolate is bound by residues L117 and 121–123; that span reads GHL. K226 is modified (N6-(pyridoxal phosphate)lysine). 349 to 351 contacts (6S)-5,6,7,8-tetrahydrofolate; it reads SPF.

It belongs to the SHMT family. As to quaternary structure, homodimer. Pyridoxal 5'-phosphate is required as a cofactor.

The protein resides in the cytoplasm. The enzyme catalyses (6R)-5,10-methylene-5,6,7,8-tetrahydrofolate + glycine + H2O = (6S)-5,6,7,8-tetrahydrofolate + L-serine. The protein operates within one-carbon metabolism; tetrahydrofolate interconversion. Its pathway is amino-acid biosynthesis; glycine biosynthesis; glycine from L-serine: step 1/1. Functionally, catalyzes the reversible interconversion of serine and glycine with tetrahydrofolate (THF) serving as the one-carbon carrier. This reaction serves as the major source of one-carbon groups required for the biosynthesis of purines, thymidylate, methionine, and other important biomolecules. Also exhibits THF-independent aldolase activity toward beta-hydroxyamino acids, producing glycine and aldehydes, via a retro-aldol mechanism. The sequence is that of Serine hydroxymethyltransferase from Listeria innocua serovar 6a (strain ATCC BAA-680 / CLIP 11262).